The following is a 441-amino-acid chain: Endothelin receptor type B (441 aa).

The N-terminal stretch at 1 to 26 (MQPLPSLCGRALVALILACGVAGIQA) is a signal peptide. Over 27-100 (EEREFPPAGA…GPIEIKETFK (74 aa)) the chain is Extracellular. Residues 30–87 (EFPPAGATQPLPGTGEMMETPTETSWPGRSNASDPRSSATPQIPRGGRMAGIPPRTPP) form a disordered region. The segment covering 41–53 (PGTGEMMETPTET) has biased composition (low complexity). Polar residues predominate over residues 54–70 (SWPGRSNASDPRSSATP). A helical membrane pass occupies residues 101 to 125 (YINTVVSCLVFVLGIIGNSTLLRII). Over 126–136 (YKNKCMRNGPN) the chain is Cytoplasmic. The helical transmembrane segment at 137–162 (ILIASLALGDLLHIIIDIPINTYKLL) threads the bilayer. Topologically, residues 163–174 (AKDWPFGVEMCK) are extracellular. Cys-173 and Cys-254 are oxidised to a cystine. The chain crosses the membrane as a helical span at residues 175–196 (LVPFIQKASVGITVLSLCALSI). At 197–217 (DRYRAVASWSRIKGIGVPKWT) the chain is on the cytoplasmic side. Residues 218-242 (AVEIVLIWVVSVVLAVPEAVGFDII) form a helical membrane-spanning segment. Over 243–270 (TSDHIGNKLRICLLHPTQKTAFMQFYKT) the chain is Extracellular. The chain crosses the membrane as a helical span at residues 271-295 (AKDWWLFSFYFCLPLAITALFYTLM). Residues 296–323 (TCEMLRKKSGMQIALNDHLKQRREVAKT) are Cytoplasmic-facing. Ser-304 is subject to Phosphoserine. Residues 324-349 (VFCLVLVFALCWLPLHLSRILKLTLY) traverse the membrane as a helical segment. Residues 350–361 (DQHDPRRCEFLS) lie on the Extracellular side of the membrane. The helical transmembrane segment at 362–388 (FLLVLDYIGINMASLNSCINPIALYLV) threads the bilayer. Over 389 to 441 (SKRFKNCFKSCLCCWCQSFEEKQSLEEKQSCLKFKANDHGYDNFRSSNKYSSS) the chain is Cytoplasmic. Residues Cys-402 and Cys-404 are each lipidated (S-palmitoyl cysteine). 3 positions are modified to phosphoserine: Ser-418, Ser-434, and Ser-435. Tyr-438 carries the post-translational modification Phosphotyrosine. A phosphoserine mark is found at Ser-439, Ser-440, and Ser-441.

This sequence belongs to the G-protein coupled receptor 1 family. Endothelin receptor subfamily. EDNRB sub-subfamily. It is not sure whether phosphorylation is on Ser-434 or Ser-435.

The protein resides in the cell membrane. Non-specific receptor for endothelin 1, 2, and 3. Mediates its action by association with G proteins that activate a phosphatidylinositol-calcium second messenger system. This Bos taurus (Bovine) protein is Endothelin receptor type B (EDNRB).